We begin with the raw amino-acid sequence, 313 residues long: MKKQLIIGTRSSPLALWQAEFTKAELSRHFPDLEITLKLVKTTGDVLLDSPLSKIGDMGLFTKDIEKFLIAKEIDLAVHSLKDVPTATPEGLIISAFTEREDTRDVIISKTGAKLLDLPKNAKVATSSLRRMSQLKSLRPDFEICDIRGNLNTRFKKFDEGEFDAMMLAYAGVYRLNFSDRISEILPHEIMLPAVGQGALGIETRVDDEQTREIVKVMNHSTTEYCCKAERALLRHLQGGCQIPIGAYASFKNGTLHLLAFVGSTDGTIGIRDEITKTGLTSPSQAEEAGIELAKELLKQGAEKILSEIRKSC.

Residue Cys-241 is modified to S-(dipyrrolylmethanemethyl)cysteine.

It belongs to the HMBS family. In terms of assembly, monomer. Dipyrromethane serves as cofactor.

It carries out the reaction 4 porphobilinogen + H2O = hydroxymethylbilane + 4 NH4(+). The protein operates within porphyrin-containing compound metabolism; protoporphyrin-IX biosynthesis; coproporphyrinogen-III from 5-aminolevulinate: step 2/4. It functions in the pathway porphyrin-containing compound metabolism; chlorophyll biosynthesis. Its function is as follows. Tetrapolymerization of the monopyrrole PBG into the hydroxymethylbilane pre-uroporphyrinogen in several discrete steps. The polypeptide is Porphobilinogen deaminase (Chlorobium luteolum (strain DSM 273 / BCRC 81028 / 2530) (Pelodictyon luteolum)).